A 413-amino-acid polypeptide reads, in one-letter code: Gamma-glutamyl phosphate reductase (413 aa).

This sequence belongs to the gamma-glutamyl phosphate reductase family.

It is found in the cytoplasm. The catalysed reaction is L-glutamate 5-semialdehyde + phosphate + NADP(+) = L-glutamyl 5-phosphate + NADPH + H(+). It functions in the pathway amino-acid biosynthesis; L-proline biosynthesis; L-glutamate 5-semialdehyde from L-glutamate: step 2/2. Functionally, catalyzes the NADPH-dependent reduction of L-glutamate 5-phosphate into L-glutamate 5-semialdehyde and phosphate. The product spontaneously undergoes cyclization to form 1-pyrroline-5-carboxylate. The chain is Gamma-glutamyl phosphate reductase from Alkaliphilus oremlandii (strain OhILAs) (Clostridium oremlandii (strain OhILAs)).